The following is a 713-amino-acid chain: Probable 1-deoxy-D-xylulose-5-phosphate synthase 2, chloroplastic (713 aa).

The transit peptide at 1-30 (MALQASSSPSMFRAIPTNTNASCRRKLQVR) directs the protein to the chloroplast. Residues histidine 140 and 181-183 (GHS) each bind thiamine diphosphate. Aspartate 212 serves as a coordination point for Mg(2+). Residues 213-214 (GA), asparagine 241, tyrosine 362, and glutamate 444 contribute to the thiamine diphosphate site. Mg(2+) is bound at residue asparagine 241.

It belongs to the transketolase family. DXPS subfamily. Homodimer. Mg(2+) serves as cofactor. Requires thiamine diphosphate as cofactor.

It localises to the plastid. The protein resides in the chloroplast. The catalysed reaction is D-glyceraldehyde 3-phosphate + pyruvate + H(+) = 1-deoxy-D-xylulose 5-phosphate + CO2. It functions in the pathway metabolic intermediate biosynthesis; 1-deoxy-D-xylulose 5-phosphate biosynthesis; 1-deoxy-D-xylulose 5-phosphate from D-glyceraldehyde 3-phosphate and pyruvate: step 1/1. Catalyzes the acyloin condensation reaction between C atoms 2 and 3 of pyruvate and glyceraldehyde 3-phosphate to yield 1-deoxy-D-xylulose-5-phosphate (DXP). Is a limiting enzyme for plastidic isoprenoid biosynthesis and essential for chloroplast development. The chain is Probable 1-deoxy-D-xylulose-5-phosphate synthase 2, chloroplastic from Oryza sativa subsp. japonica (Rice).